Reading from the N-terminus, the 407-residue chain is Protein arginine N-methyltransferase 2 (407 aa).

The 222-residue stretch at 186-407 folds into the RMT2 domain; it reads TAADQATYLK…YYYHPEIRFA (222 aa). S-adenosyl-L-methionine contacts are provided by residues Tyr-193, Met-223, 246–251, 267–269, 294–295, and Asp-315; these read FGMGII, EAH, and WQ.

It belongs to the class I-like SAM-binding methyltransferase superfamily. RMT2 methyltransferase family. In terms of assembly, monomer.

Its subcellular location is the cytoplasm. The protein resides in the nucleus. Functionally, S-adenosyl-L-methionine-dependent protein-arginine N-methyltransferase that methylates the delta-nitrogen atom of arginine residues to form N5-methylarginine (type IV) in target proteins. Monomethylates ribosomal protein L12. This Kluyveromyces lactis (strain ATCC 8585 / CBS 2359 / DSM 70799 / NBRC 1267 / NRRL Y-1140 / WM37) (Yeast) protein is Protein arginine N-methyltransferase 2.